Here is a 421-residue protein sequence, read N- to C-terminus: Proton extrusion protein PxcA (421 aa).

Residues 124–153 form a disordered region; sequence PTVHSSNPDDSQLMTSKNNSKPVPDPESDD. Residues 125 to 144 are compositionally biased toward polar residues; it reads TVHSSNPDDSQLMTSKNNSK. The next 4 helical transmembrane spans lie at 203-223, 298-318, 345-365, and 381-401; these read FVLL…SFIV, AIKN…LLIS, IIIL…WEVI, and FIFL…KYWI.

This sequence belongs to the CemA family.

The protein resides in the cell inner membrane. Its function is as follows. Required for H(+) efflux immediately after light irradiation to form a rapid H(+) concentration gradient across the thylakoid membranes. Together with PxcL, contributes to transient H(+) uptake following dark to light transition. The chain is Proton extrusion protein PxcA from Synechococcus sp. (strain ATCC 27144 / PCC 6301 / SAUG 1402/1) (Anacystis nidulans).